A 420-amino-acid chain; its full sequence is Synaptosomal-associated protein 47 (420 aa).

T-SNARE coiled-coil homology domains lie at 110–172 (AEAA…LTEL) and 357–419 (TSEP…MKKL). Residues 338 to 357 (ATHCEPSSGSQEGRPLQLQT) form a disordered region. The segment covering 342–357 (EPSSGSQEGRPLQLQT) has biased composition (polar residues).

It belongs to the SVAP1 family. As to quaternary structure, forms a complex containing SNAP47, VAMP2 and STX1A. Associates with the BLOC-1 complex. Interacts with BLOC1S6.

It is found in the endomembrane system. It localises to the cytoplasm. The protein resides in the perinuclear region. Its function is as follows. May play a role in intracellular membrane fusion. The polypeptide is Synaptosomal-associated protein 47 (SNAP47) (Bos taurus (Bovine)).